Consider the following 116-residue polypeptide: Thioredoxin H-type (116 aa).

Residues 2–115 (AEEAQVIACH…HKIAVHAPIT (114 aa)) enclose the Thioredoxin domain. Catalysis depends on nucleophile residues Cys39 and Cys42. Cys39 and Cys42 form a disulfide bridge.

This sequence belongs to the thioredoxin family. Plant H-type subfamily.

The protein resides in the cytoplasm. Participates in various redox reactions through the reversible oxidation of the active center dithiol to a disulfide. The H form is known to activate a number of cytosolic enzymes. The chain is Thioredoxin H-type from Fagopyrum esculentum (Common buckwheat).